Consider the following 453-residue polypeptide: Oocyte zinc finger protein XlCOF6 (453 aa).

14 consecutive C2H2-type zinc fingers follow at residues 6 to 29 (FICS…CGKH), 67 to 89 (FTCT…HKTH), 95 to 117 (FTCM…YKAH), 123 to 145 (VRCT…KRLH), 151 to 173 (FTCT…HKTH), 179 to 201 (FACT…QRTH), 207 to 229 (FTCT…RRTH), 235 to 257 (FTCT…HKTH), 263 to 285 (FTCT…QITH), 291 to 313 (FTCT…HKTH), 319 to 341 (FACT…QRTH), 375 to 397 (FTCT…HKTH), 403 to 425 (FTCT…QRTH), and 431 to 453 (FTCT…RITH).

The protein belongs to the krueppel C2H2-type zinc-finger protein family.

Its subcellular location is the nucleus. Its function is as follows. May be involved in transcriptional regulation. The protein is Oocyte zinc finger protein XlCOF6 of Xenopus laevis (African clawed frog).